We begin with the raw amino-acid sequence, 1306 residues long: Clustered mitochondria protein homolog (1306 aa).

Residues 1-11 show a composition bias toward low complexity; that stretch reads MAVNNEVNNAA. The segment at 1–47 is disordered; sequence MAVNNEVNNAASETPTDVSSSSQKLATEETALTNGADHEEEDGGEAG. Over residues 12 to 33 the composition is skewed to polar residues; the sequence is SETPTDVSSSSQKLATEETALT. Positions 336 to 580 constitute a Clu domain; the sequence is DITRTQENYL…RVTPLDITWM (245 aa). 2 disordered regions span residues 630 to 689 and 912 to 956; these read ERKR…QERI and KQSQ…SPAA. Over residues 656–689 the composition is skewed to basic and acidic residues; that stretch reads EPAKSEEPTENGELAKKSESDEAAEPSKPDQERI. TPR repeat units lie at residues 1032–1065, 1074–1107, and 1116–1149; these read ARVY…SERT, LLNY…WKVV, and ITTI…CEEV. The tract at residues 1275–1306 is disordered; it reads FIEGSDQSNQNKKRPGRSNPKRRGGAAATAGK. Residues 1285–1298 are compositionally biased toward basic residues; that stretch reads NKKRPGRSNPKRRG.

This sequence belongs to the CLU family. In terms of assembly, may associate with the eukaryotic translation initiation factor 3 (eIF-3) complex.

The protein resides in the cytoplasm. MRNA-binding protein involved in proper cytoplasmic distribution of mitochondria. This chain is Clustered mitochondria protein homolog, found in Botryotinia fuckeliana (strain B05.10) (Noble rot fungus).